We begin with the raw amino-acid sequence, 214 residues long: Auxin-binding protein ABP20 (214 aa).

The first 23 residues, 1 to 23 (MPQATMIFPILFTFFLLLSSSNA), serve as a signal peptide directing secretion. A disulfide bond links Cys29 and Cys44. Residues 58-204 (SGLGIAGNTS…TTFLDAAQIK (147 aa)) form the Cupin type-1 domain. N-linked (GlcNAc...) asparagine glycosylation is present at Asn65. Positions 106, 108, 113, and 152 each coordinate Mn(2+).

It belongs to the germin family. As to quaternary structure, interacts with ABP19.

Its subcellular location is the secreted. The protein resides in the extracellular space. It is found in the apoplast. It localises to the cell wall. Its function is as follows. Probable receptor for the plant growth-promoting hormone auxin. The sequence is that of Auxin-binding protein ABP20 (ABP20) from Prunus persica (Peach).